Here is a 370-residue protein sequence, read N- to C-terminus: ADP-ribosylhydrolase ARH3 (370 aa).

3 residues coordinate Mg(2+): Glu-35, Asp-66, and Asp-67. Residue Asp-66 participates in substrate binding. Substrate contacts are provided by residues Arg-135–Gly-141, His-171, Leu-225, and Ile-261. Asp-304, Asp-306, and Thr-307 together coordinate Mg(2+).

Belongs to the ADP-ribosylglycohydrolase family. In terms of assembly, monomer. It depends on Mg(2+) as a cofactor.

The protein resides in the nucleus. It localises to the cytoplasm. The protein localises to the chromosome. It is found in the mitochondrion matrix. The enzyme catalyses [(1''-&gt;2')-ADP-alpha-D-ribose](n) + H2O = [(1''-&gt;2')-ADP-alpha-D-ribose](n-1) + ADP-D-ribose. It catalyses the reaction 1''-O-acetyl-ADP-alpha-D-ribose + H2O = ADP-D-ribose + acetate + H(+). The catalysed reaction is O-(ADP-D-ribosyl)-L-seryl-[protein] + H2O = ADP-D-ribose + L-seryl-[protein]. It carries out the reaction alpha-NAD(+) + H2O = ADP-D-ribose + nicotinamide + H(+). The protein undergoes a dramatic conformational switch from closed to open states upon substrate-binding, which enables specific substrate recognition for the 1''-O-linkage. The glutamate flap (Glu-35) blocks substrate entrance to Mg(2+) in the unliganded closed state. In presence of substrate, Glu-35 is ejected from the active site: this closed-to-open transition significantly widens the substrate-binding channel and precisely positions the scissile 1''-O-linkage for cleavage while securing tightly 2'- and 3'-hydroxyls of ADP-ribose. Functionally, ADP-ribosylhydrolase that preferentially hydrolyzes the scissile alpha-O-linkage attached to the anomeric C1'' position of ADP-ribose and acts on different substrates, such as proteins ADP-ribosylated on serine and threonine, free poly(ADP-ribose) and O-acetyl-ADP-D-ribose. Specifically acts as a serine mono-ADP-ribosylhydrolase by mediating the removal of mono-ADP-ribose attached to serine residues on proteins, thereby playing a key role in DNA damage response. Serine ADP-ribosylation of proteins constitutes the primary form of ADP-ribosylation of proteins in response to DNA damage. Does not hydrolyze ADP-ribosyl-arginine, -cysteine, -diphthamide, or -asparagine bonds. Also able to degrade protein free poly(ADP-ribose), which is synthesized in response to DNA damage: free poly(ADP-ribose) acts as a potent cell death signal and its degradation by ADPRHL2 protects cells from poly(ADP-ribose)-dependent cell death, a process named parthanatos. Also hydrolyzes free poly(ADP-ribose) in mitochondria. Specifically digests O-acetyl-ADP-D-ribose, a product of deacetylation reactions catalyzed by sirtuins. Specifically degrades 1''-O-acetyl-ADP-D-ribose isomer, rather than 2''-O-acetyl-ADP-D-ribose or 3''-O-acetyl-ADP-D-ribose isomers. This chain is ADP-ribosylhydrolase ARH3 (adprs), found in Danio rerio (Zebrafish).